Reading from the N-terminus, the 592-residue chain is K(+) efflux antiporter 4 (592 aa).

The signal sequence occupies residues 1 to 35 (MRRCKNNTDKFSVITMRLLTLLLICTFFFFFSFAY). 12 helical membrane-spanning segments follow: residues 169–189 (LISD…AFAC), 193–213 (PVIT…LSFV), 221–241 (TVAQ…FSAA), 248–268 (AVAI…SGIT), 279–299 (GIFV…KFLM), 313–333 (VGTL…LPVL), 343–363 (VLSM…LFVL), 388–408 (LAAV…GLSL), 437–457 (NFFA…HFLW), 462–482 (ILLA…AIVV), 491–511 (TAVL…VLLS), and 535–555 (LVTT…GVLL).

It belongs to the monovalent cation:proton antiporter 2 (CPA2) transporter (TC 2.A.37) family. KEA (TC 2.A.37.1) subfamily. In terms of tissue distribution, expressed in roots, stems, leaves, flowers and silique.

The protein resides in the golgi apparatus membrane. The protein localises to the golgi apparatus. It localises to the trans-Golgi network membrane. Its subcellular location is the prevacuolar compartment membrane. It is found in the endomembrane system. It carries out the reaction K(+)(in) + H(+)(out) = K(+)(out) + H(+)(in). Its function is as follows. Electroneutral K(+)/H(+) efflux antiporter involved in K(+) homeostasis and osmotic adjustment. Together with KEA5 and KEA6, promotes growth and development, and facilitates endosomal pH and ions homeostasis, as well as salt tolerance (e.g. K(+), NaCl and LiCl), probably by supporting cell wall biosynthesis during rapid etiolated seedling growth. This chain is K(+) efflux antiporter 4, found in Arabidopsis thaliana (Mouse-ear cress).